We begin with the raw amino-acid sequence, 433 residues long: Serine--tRNA ligase (433 aa).

235 to 237 (TSE) serves as a coordination point for L-serine. Residue 266-268 (RSE) participates in ATP binding. Glutamate 289 is an L-serine binding site. Residue 353 to 356 (EISS) coordinates ATP. Serine 388 serves as a coordination point for L-serine.

Belongs to the class-II aminoacyl-tRNA synthetase family. Type-1 seryl-tRNA synthetase subfamily. In terms of assembly, homodimer. The tRNA molecule binds across the dimer.

The protein resides in the cytoplasm. It catalyses the reaction tRNA(Ser) + L-serine + ATP = L-seryl-tRNA(Ser) + AMP + diphosphate + H(+). The catalysed reaction is tRNA(Sec) + L-serine + ATP = L-seryl-tRNA(Sec) + AMP + diphosphate + H(+). Its pathway is aminoacyl-tRNA biosynthesis; selenocysteinyl-tRNA(Sec) biosynthesis; L-seryl-tRNA(Sec) from L-serine and tRNA(Sec): step 1/1. Catalyzes the attachment of serine to tRNA(Ser). Is also able to aminoacylate tRNA(Sec) with serine, to form the misacylated tRNA L-seryl-tRNA(Sec), which will be further converted into selenocysteinyl-tRNA(Sec). This is Serine--tRNA ligase from Burkholderia ambifaria (strain ATCC BAA-244 / DSM 16087 / CCUG 44356 / LMG 19182 / AMMD) (Burkholderia cepacia (strain AMMD)).